Here is a 97-residue protein sequence, read N- to C-terminus: MLKMNLANLQLFAHKKGGGSTSNGRDSQAKRLGAKAADGQTVTGGSILYRQRGTHIYPGVNVGRGGDDTLFAKVEGVVRFERKGRDKKQVSVYPIAK.

Positions 1-12 are excised as a propeptide; it reads MLKMNLANLQLF. The interval 14-37 is disordered; it reads HKKGGGSTSNGRDSQAKRLGAKAA.

Belongs to the bacterial ribosomal protein bL27 family. Post-translationally, the N-terminus is cleaved by ribosomal processing cysteine protease Prp.

This is Large ribosomal subunit protein bL27 from Streptococcus gordonii (strain Challis / ATCC 35105 / BCRC 15272 / CH1 / DL1 / V288).